Consider the following 452-residue polypeptide: Bifunctional protein GlmU (452 aa).

A pyrophosphorylase region spans residues 1–233 (MTDRPFAALI…AWEVAGVNSR (233 aa)). Residues 11 to 14 (LAAG), Lys25, Gln76, 81 to 82 (GT), 104 to 106 (YGD), Gly144, Glu159, Asn174, and Asn231 each bind UDP-N-acetyl-alpha-D-glucosamine. Mg(2+) is bound at residue Asp106. Asn231 contacts Mg(2+). Positions 234-254 (AELAAVEAEWQRRRRLAAMAD) are linker. The tract at residues 255–452 (GATLIAPETV…AMKIKKAARK (198 aa)) is N-acetyltransferase. Arg320 and Lys338 together coordinate UDP-N-acetyl-alpha-D-glucosamine. His350 serves as the catalytic Proton acceptor. Residues Tyr353 and Asn364 each contribute to the UDP-N-acetyl-alpha-D-glucosamine site. Residues Ala367, 373–374 (NY), Ser392, Ala410, and Arg427 each bind acetyl-CoA.

The protein in the N-terminal section; belongs to the N-acetylglucosamine-1-phosphate uridyltransferase family. It in the C-terminal section; belongs to the transferase hexapeptide repeat family. As to quaternary structure, homotrimer. The cofactor is Mg(2+).

It localises to the cytoplasm. It catalyses the reaction alpha-D-glucosamine 1-phosphate + acetyl-CoA = N-acetyl-alpha-D-glucosamine 1-phosphate + CoA + H(+). The enzyme catalyses N-acetyl-alpha-D-glucosamine 1-phosphate + UTP + H(+) = UDP-N-acetyl-alpha-D-glucosamine + diphosphate. The protein operates within nucleotide-sugar biosynthesis; UDP-N-acetyl-alpha-D-glucosamine biosynthesis; N-acetyl-alpha-D-glucosamine 1-phosphate from alpha-D-glucosamine 6-phosphate (route II): step 2/2. It functions in the pathway nucleotide-sugar biosynthesis; UDP-N-acetyl-alpha-D-glucosamine biosynthesis; UDP-N-acetyl-alpha-D-glucosamine from N-acetyl-alpha-D-glucosamine 1-phosphate: step 1/1. Its pathway is bacterial outer membrane biogenesis; LPS lipid A biosynthesis. Functionally, catalyzes the last two sequential reactions in the de novo biosynthetic pathway for UDP-N-acetylglucosamine (UDP-GlcNAc). The C-terminal domain catalyzes the transfer of acetyl group from acetyl coenzyme A to glucosamine-1-phosphate (GlcN-1-P) to produce N-acetylglucosamine-1-phosphate (GlcNAc-1-P), which is converted into UDP-GlcNAc by the transfer of uridine 5-monophosphate (from uridine 5-triphosphate), a reaction catalyzed by the N-terminal domain. This is Bifunctional protein GlmU from Rhizorhabdus wittichii (strain DSM 6014 / CCUG 31198 / JCM 15750 / NBRC 105917 / EY 4224 / RW1) (Sphingomonas wittichii).